The chain runs to 467 residues: ATP synthase subunit beta, sodium ion specific (467 aa).

151–158 (GGAGVGKT) contributes to the ATP binding site.

Belongs to the ATPase alpha/beta chains family. In terms of assembly, F-type ATPases have 2 components, CF(1) - the catalytic core - and CF(0) - the membrane proton channel. CF(1) has five subunits: alpha(3), beta(3), gamma(1), delta(1), epsilon(1). CF(0) has three main subunits: a, b and c.

It is found in the cell membrane. The catalysed reaction is 4 Na(+)(in) + ATP + H2O = 4 Na(+)(out) + ADP + phosphate + H(+). In terms of biological role, produces ATP from ADP in the presence of a sodium ion gradient across the membrane. The beta chain is the catalytic subunit. This is ATP synthase subunit beta, sodium ion specific from Propionigenium modestum.